We begin with the raw amino-acid sequence, 1390 residues long: DNA-directed RNA polymerase subunit beta (1390 aa).

It belongs to the RNA polymerase beta chain family. As to quaternary structure, the RNAP catalytic core consists of 2 alpha, 1 beta, 1 beta' and 1 omega subunit. When a sigma factor is associated with the core the holoenzyme is formed, which can initiate transcription.

It catalyses the reaction RNA(n) + a ribonucleoside 5'-triphosphate = RNA(n+1) + diphosphate. Its function is as follows. DNA-dependent RNA polymerase catalyzes the transcription of DNA into RNA using the four ribonucleoside triphosphates as substrates. In Chromobacterium violaceum (strain ATCC 12472 / DSM 30191 / JCM 1249 / CCUG 213 / NBRC 12614 / NCIMB 9131 / NCTC 9757 / MK), this protein is DNA-directed RNA polymerase subunit beta.